A 113-amino-acid polypeptide reads, in one-letter code: Prefoldin subunit beta (113 aa).

Belongs to the prefoldin subunit beta family. Heterohexamer of two alpha and four beta subunits.

The protein resides in the cytoplasm. Functionally, molecular chaperone capable of stabilizing a range of proteins. Seems to fulfill an ATP-independent, HSP70-like function in archaeal de novo protein folding. The polypeptide is Prefoldin subunit beta (Methanococcus vannielii (strain ATCC 35089 / DSM 1224 / JCM 13029 / OCM 148 / SB)).